The following is a 396-amino-acid chain: S-adenosylmethionine synthase (396 aa).

His-16 is a binding site for ATP. Asp-18 contacts Mg(2+). Glu-44 is a K(+) binding site. L-methionine-binding residues include Glu-57 and Gln-100. Positions 100–110 (QSVDIAQGVDR) are flexible loop. Residues 165-167 (DAK), Asp-240, 246-247 (RK), Ala-263, and Lys-267 contribute to the ATP site. Position 240 (Asp-240) interacts with L-methionine. Lys-271 provides a ligand contact to L-methionine.

The protein belongs to the AdoMet synthase family. Homotetramer; dimer of dimers. Mg(2+) is required as a cofactor. It depends on K(+) as a cofactor.

Its subcellular location is the cytoplasm. The enzyme catalyses L-methionine + ATP + H2O = S-adenosyl-L-methionine + phosphate + diphosphate. The protein operates within amino-acid biosynthesis; S-adenosyl-L-methionine biosynthesis; S-adenosyl-L-methionine from L-methionine: step 1/1. Functionally, catalyzes the formation of S-adenosylmethionine (AdoMet) from methionine and ATP. The overall synthetic reaction is composed of two sequential steps, AdoMet formation and the subsequent tripolyphosphate hydrolysis which occurs prior to release of AdoMet from the enzyme. In Pseudomonas entomophila (strain L48), this protein is S-adenosylmethionine synthase.